Consider the following 404-residue polypeptide: Cysteine desulfurase IscS (404 aa).

Residues 75 to 76, Asn-155, Gln-183, and 203 to 205 contribute to the pyridoxal 5'-phosphate site; these read AT and SAH. Lys-206 carries the post-translational modification N6-(pyridoxal phosphate)lysine. Thr-243 serves as a coordination point for pyridoxal 5'-phosphate. Cys-328 functions as the Cysteine persulfide intermediate in the catalytic mechanism. Cys-328 contacts [2Fe-2S] cluster.

This sequence belongs to the class-V pyridoxal-phosphate-dependent aminotransferase family. NifS/IscS subfamily. Homodimer. Forms a heterotetramer with IscU, interacts with other sulfur acceptors. It depends on pyridoxal 5'-phosphate as a cofactor.

The protein resides in the cytoplasm. It carries out the reaction (sulfur carrier)-H + L-cysteine = (sulfur carrier)-SH + L-alanine. It functions in the pathway cofactor biosynthesis; iron-sulfur cluster biosynthesis. Its function is as follows. Master enzyme that delivers sulfur to a number of partners involved in Fe-S cluster assembly, tRNA modification or cofactor biosynthesis. Catalyzes the removal of elemental sulfur atoms from cysteine to produce alanine. Functions as a sulfur delivery protein for Fe-S cluster synthesis onto IscU, an Fe-S scaffold assembly protein, as well as other S acceptor proteins. This chain is Cysteine desulfurase IscS, found in Aeromonas salmonicida (strain A449).